We begin with the raw amino-acid sequence, 335 residues long: Leukocyte cell-derived chemotaxin-2 homolog (335 aa).

An N-terminal signal peptide occupies residues 1–20 (MHLRTLHFLILIGIFIGGQT). Disulfide bonds link Cys-28–Cys-66 and Cys-39–Cys-46. Asp-63 provides a ligand contact to Zn(2+). An N-linked (GlcNAc...) asparagine glycan is attached at Asn-317.

Belongs to the LECT2/MIM-1 family. As to quaternary structure, component of a multi-protein dma-1 receptor-ligand complex, which is activated upon binding of lect-2, mnr-1 and sax-7 ligands to promote the morphogenesis of dendrites which extend from the PVD neuronal body. Within the complex interacts with sax-7; the interaction is required for lect-2 dendritic localization and enhances the binding of the mnr-1 and sax-7 ligands to the dma-1 receptor-ligand complex. Expressed in body wall muscle cells, along the boundary of the lateral hypodermis, seam cells, processes of the nervous system including commissures, sensory dendrites in the head, and lateral nerve tracts, and motor neurons and some mechanosensory neurons such as ALM.

Its subcellular location is the secreted. It is found in the cell junction. The protein resides in the extracellular space. The protein localises to the extracellular matrix. It localises to the basement membrane. Its subcellular location is the cell projection. It is found in the dendrite. The protein resides in the perikaryon. The protein localises to the cell surface. In terms of biological role, muscle-derived dendritic guidance cue, which is required for the formation of somatosensory dendritic arbors which extend from PVD and FLP sensory neurons during development. Ligand of a multi-protein dma-1 receptor-ligand complex, which is activated upon binding of lect-2, mnr-1 and sax-7 ligands to control the growth of dendrites that extend anteriorly from the PVD neuronal cell body. Enhances the binding of the mnr-1 and sax-7 ligands to the dma-1 receptor-ligand complex. Restricts the growth of secondary PVD dendritic branches and any irregularly positioned ectopic tertiary dendritic branches that originate from secondary branches, and promotes the formation of stable higher order dendritic branches. In particular, it is required for the formation of quaternary PVD dendritic branches and promotes their innervation of body wall muscles. Promotes self-avoidance of tertiary dendritic branches of PVD sensory neurons. Not required for the growth of dendrites that extend from AIY and PVQ interneurons, DVB GABergic neurons, PLM and ALM mechanosensory neurons, AFD sensory neurons and DD/VD and DA/DB motor neurons. This is Leukocyte cell-derived chemotaxin-2 homolog from Caenorhabditis elegans.